The sequence spans 480 residues: Coronin-2B (480 aa).

WD repeat units lie at residues 29–77 (HCFD…GRIE), 78–127 (PNYP…RNMT), 128–170 (EALL…LDVG), 171–212 (EPVK…PRSG), 213–259 (RVLQ…EDLS), 260–305 (MPLI…TEKP), and 306–345 (YLSY…KLVT). Positions 436–479 (NELLRMFFRQQDEIRRLKEELAQKDIRIRQLQLELKNLRNSPKN) form a coiled coil.

It belongs to the WD repeat coronin family. In terms of assembly, binds to F-actin and to vinculin. In terms of tissue distribution, expressed predominantly in brain.

The protein localises to the cytoplasm. Its subcellular location is the cytoskeleton. Functionally, may play a role in the reorganization of neuronal actin structure. The polypeptide is Coronin-2B (CORO2B) (Homo sapiens (Human)).